A 362-amino-acid chain; its full sequence is RING finger protein 32 (362 aa).

The RING-type 1; atypical zinc-finger motif lies at 127-169 (CPICKEEFELRPQVLLSCSHVFHKACLQAFEKFTNKKTCPLCR). The IQ domain maps to 186 to 215 (RIKCVTRIQAYWRGCVVRKWYRNLRKTVPP). Residues 293-352 (CSICLAPLSAAGGQRVGAGRRSREMALLSCSHVFHHACLLALEEFSVGDRPPFHACPLCR) form an RING-type 2; atypical zinc finger.

As to expression, highly expressed in testis, less abundant in ovary.

It is found in the cytoplasm. May play a role in sperm formation. This is RING finger protein 32 (RNF32) from Homo sapiens (Human).